The primary structure comprises 54 residues: uncharacterized protein (54 aa).

The chain crosses the membrane as a helical span at residues 6–26; the sequence is ILIYLLIFVAGIVIGKIRINV.

It is found in the host membrane. This is an uncharacterized protein from Acidianus convivator (ABV).